A 400-amino-acid polypeptide reads, in one-letter code: Protein phyllopod (400 aa).

The interval 109 to 127 (QERTKLRPVAMVRPTVRVQ) is interaction with sina. The segment at 125 to 145 (RVQPQSQPQLQPQVPINPTPA) is disordered. Positions 127-138 (QPQSQPQLQPQV) are enriched in low complexity. The interval 241–320 (YQRFPQPSVD…TAISEVLPTA (80 aa)) is interaction with ttk. Residues 319-362 (TARYQVTHEENKENQQAQEMELELEEEEEVDGRAELEVVQEAEA) adopt a coiled-coil conformation. The tract at residues 346–382 (EEVDGRAELEVVQEAEAPLEPQSHHKQGNSHQNSHQA) is disordered.

In terms of assembly, component of some E3 complex at least composed of sina, ebi and phyl, required for the degradation of ttk. In embryos, it is ubiquitously present before cellularization. During stages 9-11, it is expressed in neuroblasts and the SOP cells. From stage 12 onward, it decreases, but remains in a subset of PNS cells at stages 12-14. Weakly expressed in wing imaginal disks, in the SOP cells of wing margin bristles, notal macrochaetes, and other sensory organs. In leg disks, it is expressed in the precursors of the femoral chordotonal organs, as well as in external sensory SOP cells. Strongly expressed in the eye-antenna disk, it is specifically expressed in R1, R6 and R7 cells, and not in R3, R3, R4, R5 and R8 cells.

Its subcellular location is the nucleus. Its function is as follows. Essential adapter component of E3 ubiquitin ligase complexes; involved in R7 photoreceptor cell differentiation, embryonic nervous system, external sensory organ development and specification of particular muscles. E3 ubiquitin ligase complexes mediate ubiquitination and subsequent proteasomal degradation of target proteins. Required for specification of R7 photoreceptor cell fate in the eye by participating in the ubiquitination and subsequent proteasomal degradation of Tramtrack (ttk), a general inhibitor of photoreceptor differentiation. Acts downstream of Notch signaling to specify the fate of the SOP (sensory organ precursor) cells and their progeny, probably via the sina-mediated proteasomal degradation of ttk. Its restricted pattern of expression, upon Notch and Ras signaling pathways, suggests that it acts as a key determinant in E3 complexes to trigger protein proteolysis in appropriate cells. The polypeptide is Protein phyllopod (phyl) (Drosophila melanogaster (Fruit fly)).